The primary structure comprises 490 residues: Protein nucleotidyltransferase YdiU (490 aa).

8 residues coordinate ATP: Gly-94, Gly-96, Arg-97, Lys-117, Asp-129, Gly-130, Arg-180, and Arg-187. Asp-256 serves as the catalytic Proton acceptor. Residues Asn-257 and Asp-266 each coordinate Mg(2+). Asp-266 serves as a coordination point for ATP.

The protein belongs to the SELO family. Requires Mg(2+) as cofactor. Mn(2+) is required as a cofactor.

It carries out the reaction L-seryl-[protein] + ATP = 3-O-(5'-adenylyl)-L-seryl-[protein] + diphosphate. It catalyses the reaction L-threonyl-[protein] + ATP = 3-O-(5'-adenylyl)-L-threonyl-[protein] + diphosphate. The catalysed reaction is L-tyrosyl-[protein] + ATP = O-(5'-adenylyl)-L-tyrosyl-[protein] + diphosphate. The enzyme catalyses L-histidyl-[protein] + UTP = N(tele)-(5'-uridylyl)-L-histidyl-[protein] + diphosphate. It carries out the reaction L-seryl-[protein] + UTP = O-(5'-uridylyl)-L-seryl-[protein] + diphosphate. It catalyses the reaction L-tyrosyl-[protein] + UTP = O-(5'-uridylyl)-L-tyrosyl-[protein] + diphosphate. Functionally, nucleotidyltransferase involved in the post-translational modification of proteins. It can catalyze the addition of adenosine monophosphate (AMP) or uridine monophosphate (UMP) to a protein, resulting in modifications known as AMPylation and UMPylation. The chain is Protein nucleotidyltransferase YdiU from Clostridium beijerinckii (strain ATCC 51743 / NCIMB 8052) (Clostridium acetobutylicum).